The chain runs to 179 residues: MTDTETRLKALMLRGLDGDTAAYREGLALLGVRLRAYFMRRMSGAPGDVEDLVQETLLAVHLKRSTWDSAQSFTAWAHAVARYKLIDHWRRRKIRQTLPLEDHVDFLADDAPDPGVALELDRALASLPQRQRMLVSDVKLTGLSLAEAGARAGISEGAAKVALHRALKALAERMRRADG.

The sigma-70 factor domain-2 stretch occupies residues 33 to 93; that stretch reads RLRAYFMRRM…KLIDHWRRRK (61 aa). The Polymerase core binding motif lies at 51 to 64; that stretch reads DLVQETLLAVHLKR. The interval 123-170 is sigma-70 factor domain-4; the sequence is ALASLPQRQRMLVSDVKLTGLSLAEAGARAGISEGAAKVALHRALKAL. The H-T-H motif DNA-binding region spans 145–164; sequence LAEAGARAGISEGAAKVALH.

Belongs to the sigma-70 factor family. ECF subfamily.

The protein localises to the cytoplasm. Functionally, sigma factors are initiation factors that promote the attachment of RNA polymerase to specific initiation sites and are then released. Extracytoplasmic function (ECF) sigma factors are held in an inactive form by a cognate anti-sigma factor (NrsF in this case) until they are released. Up-regulates expression of 4 operons (sigF-nrsF, CCNA_02834, CCNA_03001 to CCNA_02999 and CCNA_03363 to CCNA_03366) in response to potassium dichromate (K(2)Cr(2)O(7)) or cadmium chloride (CdCl(2)). Overexpression of sigF leads to higher expression of its regulon. The polypeptide is ECF RNA polymerase sigma factor SigF (Caulobacter vibrioides (strain NA1000 / CB15N) (Caulobacter crescentus)).